Consider the following 606-residue polypeptide: NADH-ubiquinone oxidoreductase chain 5 (606 aa).

Transmembrane regions (helical) follow at residues 1-21 (MNMF…PIIM), 43-63 (AFMI…ETIF), 87-107 (MIFV…SMWY), 117-137 (FFKY…ANNM), 140-160 (LFIG…WWYG), 171-191 (AVLY…WFLL), 201-221 (IFIT…LAAT), 241-261 (TPVS…FLLI), 273-293 (IQTL…ICAL), 310-330 (LGLM…LHIC), 365-385 (VLPF…GMPF), 409-429 (LLIT…IMFF), 457-477 (LLIG…PTTI), 488-508 (MTAL…NLTT), and 582-602 (GLIK…LLIL).

It belongs to the complex I subunit 5 family. In terms of assembly, core subunit of respiratory chain NADH dehydrogenase (Complex I) which is composed of 45 different subunits.

It localises to the mitochondrion inner membrane. The catalysed reaction is a ubiquinone + NADH + 5 H(+)(in) = a ubiquinol + NAD(+) + 4 H(+)(out). Core subunit of the mitochondrial membrane respiratory chain NADH dehydrogenase (Complex I) which catalyzes electron transfer from NADH through the respiratory chain, using ubiquinone as an electron acceptor. Essential for the catalytic activity and assembly of complex I. This chain is NADH-ubiquinone oxidoreductase chain 5 (MT-ND5), found in Canis lupus familiaris (Dog).